The primary structure comprises 77 residues: Acyl carrier protein (77 aa).

Residues 2-77 (SDIEQRVKNV…LAIDYVKSHQ (76 aa)) enclose the Carrier domain. Residue serine 37 is modified to O-(pantetheine 4'-phosphoryl)serine.

The protein belongs to the acyl carrier protein (ACP) family. Post-translationally, 4'-phosphopantetheine is transferred from CoA to a specific serine of apo-ACP by AcpS. This modification is essential for activity because fatty acids are bound in thioester linkage to the sulfhydryl of the prosthetic group.

The protein resides in the cytoplasm. The protein operates within lipid metabolism; fatty acid biosynthesis. In terms of biological role, carrier of the growing fatty acid chain in fatty acid biosynthesis. The chain is Acyl carrier protein from Leucothrix mucor.